Consider the following 261-residue polypeptide: Early E1A protein (261 aa).

The tract at residues 43-51 (PTLHDLYDL) is interaction with RB1 in competition with E2F1. Residues 78 to 149 (EGLDINPPPE…VNEGVKAASD (72 aa)) are interaction with UBE2I. The PXLXP motif, interaction with host ZMYND11 signature appears at 106 to 110 (PDLGA). Positions 115–119 (LRCYE) match the LXCXE motif, interaction with host RB1 and TMEM173/STING motif. Residues 163–183 (CKSCEFHRNNTGMKELLCSLC) fold into a zinc finger. Residues 197-261 (SDDESPSPDS…DLSTRKLPRQ (65 aa)) are disordered. Low complexity predominate over residues 203-212 (SPDSTTSPPE). Positions 250–254 (PLDLS) match the PXDLS motif, CTBP-binding motif. The Nuclear localization signal signature appears at 256 to 261 (RKLPRQ).

Belongs to the adenoviridae E1A protein family. As to quaternary structure, interacts with host UBE2I; this interaction interferes with polySUMOylation. Interacts with host RB1; this interaction induces the aberrant dissociation of RB1-E2F1 complex thereby disrupting the activity of RB1 and activating E2F1-regulated genes. Interacts with host ATF7; the interaction enhances ATF7-mediated viral transactivation activity which requires the zinc binding domains of both proteins. Isoform early E1A 32 kDa protein and isoform early E1A 26 kDa protein interact (via N-terminus) with CUL1 and E3 ubiquitin ligase RBX1; these interactions inhibit RBX1-CUL1-dependent elongation reaction of ubiquitin chains and attenuate ubiquitination of SCF(FBXW7) target proteins. Interacts (via PXLXP motif) with host ZMYND11/BS69 (via MYND-type zinc finger); this interaction inhibits E1A mediated transactivation. Interacts with host EP300; this interaction stimulates the acetylation of RB1 by recruiting EP300 and RB1 into a multimeric-protein complex. Interacts with host CTBP1 and CTBP2; this interaction seems to potentiate viral replication. Interacts with host DCAF7. Interacts with host DYRK1A. Interacts with host KPNA4; this interaction allows E1A import into the host nucleus. Interacts with host EP400; this interaction stabilizes MYC. Interacts with host TBP protein; this interaction probably disrupts the TBP-TATA complex. Interacts (via LXCXE motif) with host TMEM173/STING; this interaction impairs the ability of TMEM173/STING to sense cytosolic DNA and promote the production of type I interferon (IFN-alpha and IFN-beta). Interacts (via C-terminus) with host ZBED1/hDREF (via C-terminus); the interaction is direct.

The protein resides in the host nucleus. Its function is as follows. Plays a role in viral genome replication by driving entry of quiescent cells into the cell cycle. Stimulation of progression from G1 to S phase allows the virus to efficiently use the cellular DNA replicating machinery to achieve viral genome replication. E1A protein has both transforming and trans-activating activities. Induces the disassembly of the E2F1 transcription factor from RB1 by direct competition for the same binding site on RB1, with subsequent transcriptional activation of E2F1-regulated S-phase genes and of the E2 region of the adenoviral genome. Release of E2F1 leads to the ARF-mediated inhibition of MDM2 and causes TP53/p53 to accumulate because it is not targeted for degradation by MDM2-mediated ubiquitination anymore. This increase in TP53, in turn, would arrest the cell proliferation and direct its death but this effect is counteracted by the viral protein E1B-55K. Inactivation of the ability of RB1 to arrest the cell cycle is critical for cellular transformation, uncontrolled cellular growth and proliferation induced by viral infection. Interaction with RBX1 and CUL1 inhibits ubiquitination of the proteins targeted by SCF(FBXW7) ubiquitin ligase complex, and may be linked to unregulated host cell proliferation. The tumorigenesis-restraining activity of E1A may be related to the disruption of the host CtBP-CtIP complex through the CtBP binding motif. Interaction with host TMEM173/STING impairs the ability of TMEM173/STING to sense cytosolic DNA and promote the production of type I interferon (IFN-alpha and IFN-beta). Promotes the sumoylation of host ZBED1/hDREF with SUMO1. The protein is Early E1A protein of Human adenovirus B serotype 7 (HAdV-7).